The chain runs to 300 residues: Tyrosine recombinase XerD (300 aa).

The region spanning 6–89 is the Core-binding (CB) domain; that stretch reads LFHKRLIEQF…ALKVFFHFLK (84 aa). Residues 108–293 enclose the Tyr recombinase domain; it reads RLPSILSTEE…ASESLIEKFH (186 aa). Catalysis depends on residues Arg-152, Lys-174, His-245, Arg-248, and His-271. The O-(3'-phospho-DNA)-tyrosine intermediate role is filled by Tyr-280.

This sequence belongs to the 'phage' integrase family. XerD subfamily. In terms of assembly, forms a cyclic heterotetrameric complex composed of two molecules of XerC and two molecules of XerD.

The protein localises to the cytoplasm. Site-specific tyrosine recombinase, which acts by catalyzing the cutting and rejoining of the recombining DNA molecules. The XerC-XerD complex is essential to convert dimers of the bacterial chromosome into monomers to permit their segregation at cell division. It also contributes to the segregational stability of plasmids. This Chlamydia trachomatis serovar D (strain ATCC VR-885 / DSM 19411 / UW-3/Cx) protein is Tyrosine recombinase XerD.